The following is a 563-amino-acid chain: Putative cysteine ligase BshC (563 aa).

Positions 474–506 (LEQSLMGTSKQAEKALDTLRQKTQRANRRKHDE) form a coiled coil.

This sequence belongs to the BshC family.

The polypeptide is Putative cysteine ligase BshC (Prosthecochloris aestuarii (strain DSM 271 / SK 413)).